The chain runs to 371 residues: Beta sliding clamp (371 aa).

Belongs to the beta sliding clamp family. As to quaternary structure, forms a ring-shaped head-to-tail homodimer around DNA which binds and tethers DNA polymerases and other proteins to the DNA. The DNA replisome complex has a single clamp-loading complex (3 tau and 1 each of delta, delta', psi and chi subunits) which binds 3 Pol III cores (1 core on the leading strand and 2 on the lagging strand) each with a beta sliding clamp dimer. Additional proteins in the replisome are other copies of gamma, psi and chi, Ssb, DNA helicase and RNA primase.

The protein resides in the cytoplasm. Confers DNA tethering and processivity to DNA polymerases and other proteins. Acts as a clamp, forming a ring around DNA (a reaction catalyzed by the clamp-loading complex) which diffuses in an ATP-independent manner freely and bidirectionally along dsDNA. Initially characterized for its ability to contact the catalytic subunit of DNA polymerase III (Pol III), a complex, multichain enzyme responsible for most of the replicative synthesis in bacteria; Pol III exhibits 3'-5' exonuclease proofreading activity. The beta chain is required for initiation of replication as well as for processivity of DNA replication. This Treponema pallidum (strain Nichols) protein is Beta sliding clamp (dnaN).